The primary structure comprises 155 residues: Putative pre-16S rRNA nuclease (155 aa).

This sequence belongs to the YqgF nuclease family.

It localises to the cytoplasm. Functionally, could be a nuclease involved in processing of the 5'-end of pre-16S rRNA. The protein is Putative pre-16S rRNA nuclease of Xanthomonas euvesicatoria pv. vesicatoria (strain 85-10) (Xanthomonas campestris pv. vesicatoria).